The chain runs to 184 residues: Ras-related protein RabN2 (184 aa).

3 to 10 is a GTP binding site; the sequence is GDYRSGKT. The short motif at 25–32 is the Effector region element; that stretch reads TNPSTFDY. GTP contacts are provided by residues 50-54 and 117-120; these read DTAGH and TKSD.

This sequence belongs to the small GTPase superfamily. Rab family.

The sequence is that of Ras-related protein RabN2 (rabN2) from Dictyostelium discoideum (Social amoeba).